The primary structure comprises 140 residues: Putative pre-16S rRNA nuclease (140 aa).

The protein belongs to the YqgF nuclease family.

The protein localises to the cytoplasm. Could be a nuclease involved in processing of the 5'-end of pre-16S rRNA. The sequence is that of Putative pre-16S rRNA nuclease from Yersinia pseudotuberculosis serotype O:1b (strain IP 31758).